The primary structure comprises 465 residues: Paired box protein Pax-8 (465 aa).

The paired DNA-binding region spans 26–152 (GHGGLNQLGG…SSINRIIRTK (127 aa)). A PAI subdomain region spans residues 29 to 85 (GLNQLGGAFVNGRPLPEVVRQRIVDLAHQGVRPCDISRQLRVSHGCVSKILGRYYET). An RED subdomain region spans residues 104-152 (KVVEKIGDYKRQNPTMFAWEIRDRLLTDGVCDNDTVPSVSSINRIIRTK). A disordered region spans residues 206-227 (PSADGKRKLDDSDQESCRLSID).

As to expression, expression starts at late gastrula stages in cells fated to become the primordia of the otic system and the pronephric kidney. Expression is maintained in these two structures through late tailbud stages. Does not appear to be expressed in the thyroid gland.

It localises to the nucleus. Its function is as follows. Probable transcription factor. Involved in kidney development, acting synergistically with lhx1/lim-1 to establish the pronephric primordium in late gastrulae/early neurulae. This is Paired box protein Pax-8 from Xenopus laevis (African clawed frog).